The following is a 130-amino-acid chain: Ribonuclease P protein component 2 (130 aa).

It belongs to the eukaryotic/archaeal RNase P protein component 2 family. In terms of assembly, consists of a catalytic RNA component and at least 4-5 protein subunits.

It is found in the cytoplasm. It catalyses the reaction Endonucleolytic cleavage of RNA, removing 5'-extranucleotides from tRNA precursor.. Functionally, part of ribonuclease P, a protein complex that generates mature tRNA molecules by cleaving their 5'-ends. In Methanococcus maripaludis (strain C6 / ATCC BAA-1332), this protein is Ribonuclease P protein component 2.